The sequence spans 66 residues: Large ribosomal subunit protein bL33c (66 aa).

Belongs to the bacterial ribosomal protein bL33 family.

It localises to the plastid. It is found in the chloroplast. This Arabis hirsuta (Hairy rock-cress) protein is Large ribosomal subunit protein bL33c.